We begin with the raw amino-acid sequence, 309 residues long: uncharacterized protein (309 aa).

The RPE1 insert domain maps to 9-55; sequence NFLYNIANKDGFKGYKECRTSAYKNVFDDSSTKSTSKFHLGISDTKN. Residues 62–82 form a helical membrane-spanning segment; sequence IIGLILIIFAGVLFYAYILQH.

It belongs to the LicD transferase family.

It localises to the membrane. This is an uncharacterized protein from Rickettsia typhi (strain ATCC VR-144 / Wilmington).